The following is a 148-amino-acid chain: Receptor activity-modifying protein 1 (148 aa).

An N-terminal signal peptide occupies residues 1–26 (MAPGLRGLPRCGLWLLLAHHLFMVTA). Cystine bridges form between cysteine 27/cysteine 82, cysteine 40/cysteine 72, and cysteine 57/cysteine 104. The Extracellular portion of the chain corresponds to 27–118 (CRDPDYGTLI…RALRDPPNSI (92 aa)). Residues 119–140 (LCPFIALPITVTLLMTALVVWR) form a helical membrane-spanning segment. Over 141–148 (SKRTEGIV) the chain is Cytoplasmic.

This sequence belongs to the RAMP family. As to quaternary structure, heterodimer of CALCRL and RAMP1; the interaction induces allosteric modulation of CALCRL function and CGRP1/CALCA and CGRP2/CALCB ligand specificity. Heterodimer of CALCR and RAMP1; interaction forms the AMYR1 receptor complex for amylin/IAPP and CGRP1/CALCA ligands. In terms of tissue distribution, expressed predominantly in the thymus, skeletal muscle, embryonic and adult brain, embryonic and adult lung, and colon.

The protein localises to the cell membrane. In terms of biological role, accessory protein that interacts with and modulates the function of G-protein coupled receptors including calcitonin gene-related peptide type 1 receptor (CALCRL) and calcitonin receptor (CALCR). Required for the transport of CALCRL to the plasma membrane. Together with CALCRL, form the receptor complex for the calcitonin gene-related peptides CGRP1/CALCA and CGRP2/CALCB. Together with CALCR, form the AMYR1 receptor complex for amylin/IAPP and CGRP1/CALCA. The chain is Receptor activity-modifying protein 1 from Mus musculus (Mouse).